The chain runs to 155 residues: RNA pyrophosphohydrolase (155 aa).

Residues 6–148 (GYRANVAIVL…KQEVYRKALT (143 aa)) enclose the Nudix hydrolase domain. Positions 38 to 59 (GGVATGETPLQAMYRELHEEIG) match the Nudix box motif.

Belongs to the Nudix hydrolase family. RppH subfamily. Requires a divalent metal cation as cofactor.

In terms of biological role, accelerates the degradation of transcripts by removing pyrophosphate from the 5'-end of triphosphorylated RNA, leading to a more labile monophosphorylated state that can stimulate subsequent ribonuclease cleavage. The chain is RNA pyrophosphohydrolase from Francisella tularensis subsp. tularensis (strain FSC 198).